We begin with the raw amino-acid sequence, 273 residues long: Elongation factor Ts (273 aa).

The involved in Mg(2+) ion dislocation from EF-Tu stretch occupies residues threonine 79–valine 82.

It belongs to the EF-Ts family.

The protein localises to the cytoplasm. Its function is as follows. Associates with the EF-Tu.GDP complex and induces the exchange of GDP to GTP. It remains bound to the aminoacyl-tRNA.EF-Tu.GTP complex up to the GTP hydrolysis stage on the ribosome. The polypeptide is Elongation factor Ts (Hydrogenobaculum sp. (strain Y04AAS1)).